The following is a 487-amino-acid chain: Betaine aldehyde dehydrogenase (487 aa).

K(+) contacts are provided by Ser26, Ile27, and Asp93. An NAD(+)-binding site is contributed by 150–152 (GAW). Lys162 functions as the Charge relay system in the catalytic mechanism. Residues 176-179 (KPSE) and 229-232 (SVPT) each bind NAD(+). Leu244 contributes to the K(+) binding site. The Proton acceptor role is filled by Glu250. The NAD(+) site is built by Gly252, Cys284, and Glu384. Catalysis depends on Cys284, which acts as the Nucleophile. Cys284 bears the Cysteine sulfenic acid (-SOH) mark. Residues Lys454 and Gly457 each coordinate K(+). The active-site Charge relay system is Glu461.

The protein belongs to the aldehyde dehydrogenase family. As to quaternary structure, dimer of dimers. The cofactor is K(+).

It carries out the reaction betaine aldehyde + NAD(+) + H2O = glycine betaine + NADH + 2 H(+). The protein operates within amine and polyamine biosynthesis; betaine biosynthesis via choline pathway; betaine from betaine aldehyde: step 1/1. Its function is as follows. Involved in the biosynthesis of the osmoprotectant glycine betaine. Catalyzes the irreversible oxidation of betaine aldehyde to the corresponding acid. The chain is Betaine aldehyde dehydrogenase from Sinorhizobium fredii (strain NBRC 101917 / NGR234).